A 273-amino-acid chain; its full sequence is Dermonecrotic toxin SdSicTox-betaIIB1aiii (273 aa).

The active site involves H4. Mg(2+) is bound by residues E24 and D26. Residue H40 is the Nucleophile of the active site. 2 cysteine pairs are disulfide-bonded: C44–C50 and C46–C189. Position 84 (D84) interacts with Mg(2+).

It belongs to the arthropod phospholipase D family. Class II subfamily. Mg(2+) is required as a cofactor. As to expression, expressed by the venom gland.

Its subcellular location is the secreted. The enzyme catalyses an N-(acyl)-sphingosylphosphocholine = an N-(acyl)-sphingosyl-1,3-cyclic phosphate + choline. It carries out the reaction an N-(acyl)-sphingosylphosphoethanolamine = an N-(acyl)-sphingosyl-1,3-cyclic phosphate + ethanolamine. It catalyses the reaction a 1-acyl-sn-glycero-3-phosphocholine = a 1-acyl-sn-glycero-2,3-cyclic phosphate + choline. The catalysed reaction is a 1-acyl-sn-glycero-3-phosphoethanolamine = a 1-acyl-sn-glycero-2,3-cyclic phosphate + ethanolamine. Dermonecrotic toxins cleave the phosphodiester linkage between the phosphate and headgroup of certain phospholipids (sphingolipid and lysolipid substrates), forming an alcohol (often choline) and a cyclic phosphate. This toxin acts on sphingomyelin (SM). It may also act on ceramide phosphoethanolamine (CPE), lysophosphatidylcholine (LPC) and lysophosphatidylethanolamine (LPE), but not on lysophosphatidylserine (LPS), and lysophosphatidylglycerol (LPG). It acts by transphosphatidylation, releasing exclusively cyclic phosphate products as second products. Induces dermonecrosis, hemolysis, increased vascular permeability, edema, inflammatory response, and platelet aggregation. The sequence is that of Dermonecrotic toxin SdSicTox-betaIIB1aiii from Sicarius cf. damarensis (strain GJB-2008) (Six-eyed sand spider).